The chain runs to 130 residues: Large ribosomal subunit protein bL17 (130 aa).

It belongs to the bacterial ribosomal protein bL17 family. As to quaternary structure, part of the 50S ribosomal subunit. Contacts protein L32.

This Shewanella halifaxensis (strain HAW-EB4) protein is Large ribosomal subunit protein bL17.